Reading from the N-terminus, the 961-residue chain is IQ motif and SEC7 domain-containing protein 1 (961 aa).

A disordered region spans residues 21–113 (SGVEGEAPSS…SLSESYELSS (93 aa)). Residues 29 to 38 (SSETGTSLDS) show a composition bias toward polar residues. A phosphoserine mark is found at S88, S104, and S106. The IQ domain occupies 133 to 162 (TRHAARTIQTAFRQYQMNKNFERLRSSMSE). Residues S179, S247, and S251 each carry the phosphoserine modification. Disordered stretches follow at residues 263 to 291 (SEEVPASDTARARDTEPKPGLHGMDHRKL), 310 to 332 (LSPPLPLSQAGDRPSSTESDLRL), and 347 to 515 (KEDK…DSPA). A compositionally biased stretch (basic and acidic residues) spans 272-291 (ARARDTEPKPGLHGMDHRKL). Basic and acidic residues-rich tracts occupy residues 364 to 374 (ERPEPRLRVEH) and 428 to 444 (LPREEPELRPRPPRPLE). Residues 469-487 (DSINSTSNSNDTINCSSES) are compositionally biased toward low complexity. A phosphoserine mark is found at S510 and S513. Residues 515 to 708 (AFSNDVIRKR…IGIYERIRKR (194 aa)) enclose the SEC7 domain. The PH domain occupies 772–864 (HQREIFLFND…LRESVAEVQE (93 aa)). Residues 846-877 (QDRKKFTDDLRESVAEVQEMEKHRIESELEKQ) are a coiled coil. S890 is subject to Phosphoserine. Phosphotyrosine is present on Y909. Residues 920–961 (LSSSLRDLSEAGKRGRRSSAGSLESNVEFQPFQPPQPPVLCS) form a disordered region. Residues S922 and S923 each carry the phosphoserine modification. The segment covering 938 to 947 (SAGSLESNVE) has biased composition (polar residues). Pro residues predominate over residues 951–961 (FQPPQPPVLCS).

It belongs to the BRAG family. As to quaternary structure, interacts with ARF1 and ARF6. Interacts with GRIA2; the interaction is required for ARF6 activation. In terms of tissue distribution, expressed in hippocampus.

It is found in the cytoplasm. Its subcellular location is the nucleus. The protein resides in the postsynaptic density. It localises to the cytoplasmic vesicle. The protein localises to the secretory vesicle. It is found in the synaptic vesicle. In terms of biological role, guanine nucleotide exchange factor for ARF1 and ARF6. Guanine nucleotide exchange factor activity is enhanced by lipid binding. Accelerates GTP binding by ARFs of all three classes. Guanine nucleotide exchange protein for ARF6, mediating internalization of beta-1 integrin. Involved in neuronal development. In neurons, plays a role in the control of vesicle formation by endocytoc cargo. Upon long term depression, interacts with GRIA2 and mediates the activation of ARF6 to internalize synaptic AMPAR receptors. In Mus musculus (Mouse), this protein is IQ motif and SEC7 domain-containing protein 1 (Iqsec1).